The sequence spans 119 residues: Ribonuclease P protein component (119 aa).

This sequence belongs to the RnpA family. In terms of assembly, consists of a catalytic RNA component (M1 or rnpB) and a protein subunit.

It catalyses the reaction Endonucleolytic cleavage of RNA, removing 5'-extranucleotides from tRNA precursor.. In terms of biological role, RNaseP catalyzes the removal of the 5'-leader sequence from pre-tRNA to produce the mature 5'-terminus. It can also cleave other RNA substrates such as 4.5S RNA. The protein component plays an auxiliary but essential role in vivo by binding to the 5'-leader sequence and broadening the substrate specificity of the ribozyme. This chain is Ribonuclease P protein component, found in Salmonella schwarzengrund (strain CVM19633).